The primary structure comprises 235 residues: Putative 4'-phosphopantetheinyl transferase HI_0152 (235 aa).

3 residues coordinate Mg(2+): Asp112, Glu114, and Glu155.

This sequence belongs to the P-Pant transferase superfamily. Gsp/Sfp/HetI/AcpT family. The cofactor is Mg(2+).

Functionally, may transfer the 4'-phosphopantetheine moiety from coenzyme A (CoA) to a serine residue of a carrier protein domain. The chain is Putative 4'-phosphopantetheinyl transferase HI_0152 from Haemophilus influenzae (strain ATCC 51907 / DSM 11121 / KW20 / Rd).